A 164-amino-acid polypeptide reads, in one-letter code: Succinate dehydrogenase assembly factor 3, mitochondrial (164 aa).

Residues 1-51 (MRPTLLRLANASGPLPLSVSQASVQLIPPIPLYRRLLRAHRLLPVDMRYMG) constitute a mitochondrion transit peptide. The segment covering 136-145 (KSPEQIEREA) has biased composition (basic and acidic residues). A disordered region spans residues 136–164 (KSPEQIEREANSAGVSPVNPNDPTTAGNS). The span at 153 to 164 (VNPNDPTTAGNS) shows a compositional bias: polar residues.

This sequence belongs to the complex I LYR family. SDHAF3 subfamily. Interacts with the iron-sulfur protein subunit within the SDH catalytic dimer.

It is found in the mitochondrion matrix. In terms of biological role, plays an essential role in the assembly of succinate dehydrogenase (SDH), an enzyme complex (also referred to as respiratory complex II) that is a component of both the tricarboxylic acid (TCA) cycle and the mitochondrial electron transport chain, and which couples the oxidation of succinate to fumarate with the reduction of ubiquinone (coenzyme Q) to ubiquinol. Promotes maturation of the iron-sulfur protein subunit of the SDH catalytic dimer, protecting it from the deleterious effects of oxidants. May act together with SDHAF1. In Cryptococcus neoformans var. neoformans serotype D (strain B-3501A) (Filobasidiella neoformans), this protein is Succinate dehydrogenase assembly factor 3, mitochondrial.